A 165-amino-acid polypeptide reads, in one-letter code: 2-halobenzoate 1,2-dioxygenase small subunit (165 aa).

This sequence belongs to the bacterial ring-hydroxylating dioxygenase beta subunit family. In terms of assembly, heterohexamer of 3 large (CbdA) subunits and 3 small (CbdB) subunits. The heterohexamer is part of 2-halobenzoate dioxygenase two component enzyme system. The other component is a NADH:acceptor reductase (CdbC).

The enzyme catalyses a 2-halobenzoate + NADH + O2 + H(+) = a halide anion + catechol + CO2 + NAD(+). It functions in the pathway xenobiotic degradation; benzoate degradation via CoA ligation. Component of 2-halobenzoate dioxygenase multicomponent enzyme system which catalyzes the incorporation of both atoms of molecular oxygen into 2-halobenzoate to form catechol. The polypeptide is 2-halobenzoate 1,2-dioxygenase small subunit (cbdB) (Burkholderia cepacia (Pseudomonas cepacia)).